The chain runs to 762 residues: Probable inorganic carbon transporter subunit DabA (762 aa).

Zn(2+) is bound by residues Cys279, Asp281, His461, and Cys476.

Belongs to the inorganic carbon transporter (TC 9.A.2) DabA family. In terms of assembly, forms a complex with DabB. Zn(2+) serves as cofactor.

The protein resides in the cell inner membrane. In terms of biological role, part of an energy-coupled inorganic carbon pump. The polypeptide is Probable inorganic carbon transporter subunit DabA (Legionella pneumophila (strain Corby)).